Consider the following 152-residue polypeptide: 6,7-dimethyl-8-ribityllumazine synthase (152 aa).

5-amino-6-(D-ribitylamino)uracil contacts are provided by residues F22, 54–56 (AFE), and 78–80 (AVI). A (2S)-2-hydroxy-3-oxobutyl phosphate-binding site is contributed by 83–84 (ET). The active-site Proton donor is H86. F111 contributes to the 5-amino-6-(D-ribitylamino)uracil binding site. R125 provides a ligand contact to (2S)-2-hydroxy-3-oxobutyl phosphate.

This sequence belongs to the DMRL synthase family.

The catalysed reaction is (2S)-2-hydroxy-3-oxobutyl phosphate + 5-amino-6-(D-ribitylamino)uracil = 6,7-dimethyl-8-(1-D-ribityl)lumazine + phosphate + 2 H2O + H(+). It participates in cofactor biosynthesis; riboflavin biosynthesis; riboflavin from 2-hydroxy-3-oxobutyl phosphate and 5-amino-6-(D-ribitylamino)uracil: step 1/2. Catalyzes the formation of 6,7-dimethyl-8-ribityllumazine by condensation of 5-amino-6-(D-ribitylamino)uracil with 3,4-dihydroxy-2-butanone 4-phosphate. This is the penultimate step in the biosynthesis of riboflavin. The polypeptide is 6,7-dimethyl-8-ribityllumazine synthase (Limosilactobacillus reuteri (strain DSM 20016) (Lactobacillus reuteri)).